A 213-amino-acid chain; its full sequence is MLDREGFRPNVGIVLLNQKNQVFWGKRIRTHSWQFPQGGIDRGETPEQAMIRELHEEVGLLREHIRIVARTRDWLRYEVPDRYIRRDARGFYKGQKQIWFLLQLVGHDWDLNLRATDHPEFDAWRWNDYWVPLDAVVEFKRGVYEIALTELARYLPRNELRNRFLRQGVRPHEQETTFDAVPGANFELPPGGSFEPNPQTSYGLDASGKPHET.

The Nudix hydrolase domain maps to 6–149; sequence GFRPNVGIVL…KRGVYEIALT (144 aa). The Nudix box motif lies at 38–59; the sequence is GGIDRGETPEQAMIRELHEEVG. The disordered stretch occupies residues 185 to 213; it reads NFELPPGGSFEPNPQTSYGLDASGKPHET.

This sequence belongs to the Nudix hydrolase family. RppH subfamily. A divalent metal cation is required as a cofactor.

Its function is as follows. Accelerates the degradation of transcripts by removing pyrophosphate from the 5'-end of triphosphorylated RNA, leading to a more labile monophosphorylated state that can stimulate subsequent ribonuclease cleavage. This chain is RNA pyrophosphohydrolase, found in Albidiferax ferrireducens (strain ATCC BAA-621 / DSM 15236 / T118) (Rhodoferax ferrireducens).